We begin with the raw amino-acid sequence, 322 residues long: Tetraacyldisaccharide 4'-kinase (322 aa).

54–61 (SVGGTGKT) provides a ligand contact to ATP.

The protein belongs to the LpxK family.

It carries out the reaction a lipid A disaccharide + ATP = a lipid IVA + ADP + H(+). Its pathway is glycolipid biosynthesis; lipid IV(A) biosynthesis; lipid IV(A) from (3R)-3-hydroxytetradecanoyl-[acyl-carrier-protein] and UDP-N-acetyl-alpha-D-glucosamine: step 6/6. In terms of biological role, transfers the gamma-phosphate of ATP to the 4'-position of a tetraacyldisaccharide 1-phosphate intermediate (termed DS-1-P) to form tetraacyldisaccharide 1,4'-bis-phosphate (lipid IVA). The polypeptide is Tetraacyldisaccharide 4'-kinase (Francisella tularensis subsp. holarctica (strain FTNF002-00 / FTA)).